A 217-amino-acid polypeptide reads, in one-letter code: DNA transformation protein TfoX (217 aa).

It belongs to the Sxy/TfoX family.

In terms of biological role, required for DNA transformation. Positively regulates genes required for DNA transformation (late competence-specific genes) in association with CRP. Required for expression of the late competence-specific gene, com101A. Required for expression of the dprABC operon. This is DNA transformation protein TfoX from Haemophilus influenzae (strain ATCC 51907 / DSM 11121 / KW20 / Rd).